A 294-amino-acid polypeptide reads, in one-letter code: GTPase Era (294 aa).

An Era-type G domain is found at 4–170 (KSGFVSVIGR…VEEIFTFLPE (167 aa)). The tract at residues 12 to 19 (GRPNVGKS) is G1. A GTP-binding site is contributed by 12–19 (GRPNVGKS). Positions 38 to 42 (QTTRN) are G2. Positions 59-62 (DTPG) are G3. GTP is bound by residues 59–63 (DTPGI) and 121–124 (NKID). Positions 121-124 (NKID) are G4. The segment at 149–151 (ISA) is G5. One can recognise a KH type-2 domain in the interval 201 to 278 (TREEVPYGVA…YLDLWVKIEK (78 aa)).

The protein belongs to the TRAFAC class TrmE-Era-EngA-EngB-Septin-like GTPase superfamily. Era GTPase family. As to quaternary structure, monomer.

It localises to the cytoplasm. It is found in the cell inner membrane. An essential GTPase that binds both GDP and GTP, with rapid nucleotide exchange. Plays a role in 16S rRNA processing and 30S ribosomal subunit biogenesis and possibly also in cell cycle regulation and energy metabolism. In Halothermothrix orenii (strain H 168 / OCM 544 / DSM 9562), this protein is GTPase Era.